Consider the following 270-residue polypeptide: 4-hydroxy-tetrahydrodipicolinate reductase (270 aa).

Residues 8–13 (GALGRM), Asp34, 102–104 (GTT), and 128–131 (SQNY) each bind NAD(+). Residue His160 is the Proton donor/acceptor of the active site. His161 provides a ligand contact to (S)-2,3,4,5-tetrahydrodipicolinate. Catalysis depends on Lys164, which acts as the Proton donor. 170–171 (GT) is a binding site for (S)-2,3,4,5-tetrahydrodipicolinate.

It belongs to the DapB family.

It is found in the cytoplasm. The catalysed reaction is (S)-2,3,4,5-tetrahydrodipicolinate + NAD(+) + H2O = (2S,4S)-4-hydroxy-2,3,4,5-tetrahydrodipicolinate + NADH + H(+). It catalyses the reaction (S)-2,3,4,5-tetrahydrodipicolinate + NADP(+) + H2O = (2S,4S)-4-hydroxy-2,3,4,5-tetrahydrodipicolinate + NADPH + H(+). The protein operates within amino-acid biosynthesis; L-lysine biosynthesis via DAP pathway; (S)-tetrahydrodipicolinate from L-aspartate: step 4/4. Catalyzes the conversion of 4-hydroxy-tetrahydrodipicolinate (HTPA) to tetrahydrodipicolinate. This chain is 4-hydroxy-tetrahydrodipicolinate reductase, found in Methanococcus maripaludis (strain C5 / ATCC BAA-1333).